A 57-amino-acid polypeptide reads, in one-letter code: Myrmicitoxin(1)-Pm7a (57 aa).

An N-terminal signal peptide occupies residues 1–23 (MMKIIYAFLLIAVVAFMGSGIMA). The propeptide occupies 24-31 (EPLAEAIA).

The protein belongs to the formicidae venom clade 4 family. Expressed by the venom gland.

The protein localises to the secreted. Functionally, probable neurotoxin. This is Myrmicitoxin(1)-Pm7a from Pogonomyrmex maricopa (Maricopa harvester ant).